Reading from the N-terminus, the 202-residue chain is Hydrogenase expression/formation protein HupD (202 aa).

Ni(2+) contacts are provided by E28, D74, and H105.

The protein belongs to the peptidase A31 family.

In terms of biological role, not known. Could be involved in the processing of hydrogenase. The chain is Hydrogenase expression/formation protein HupD (hupD) from Rhizobium leguminosarum bv. viciae.